The following is a 221-amino-acid chain: MDYRNQSLGALAIAIPRATKLFRQHQLDFCCGGKQTLLRAANKLNLDIDALEAQLSALQTEPHSSEDWQQQPLTNLISFIISRYHDRHREQLPELVLMAEKVERVHGEKPTCPRGLAAELSAILEELTQHMYKEEQILFPMIQRGMGSQASGPIFVMEAEHDAVGQQLDVVKQLTQNVTPPEGACNTWRALYTGINEFITDLMEHIHLENNLLFPRALRGE.

The protein belongs to the RIC family. YtfE subfamily. In terms of assembly, homodimer.

The protein localises to the cytoplasm. In terms of biological role, di-iron-containing protein involved in the repair of iron-sulfur clusters damaged by oxidative and nitrosative stress conditions. In Yersinia pestis bv. Antiqua (strain Antiqua), this protein is Iron-sulfur cluster repair protein YtfE.